A 435-amino-acid chain; its full sequence is D-aminoacyl-tRNA deacylase (435 aa).

It belongs to the DtdA deacylase family. As to quaternary structure, monomer. Requires Zn(2+) as cofactor.

It catalyses the reaction a D-aminoacyl-tRNA + H2O = a tRNA + a D-alpha-amino acid + H(+). The enzyme catalyses glycyl-tRNA(Ala) + H2O = tRNA(Ala) + glycine + H(+). D-aminoacyl-tRNA deacylase with broad substrate specificity. By recycling D-aminoacyl-tRNA to D-amino acids and free tRNA molecules, this enzyme counteracts the toxicity associated with the formation of D-aminoacyl-tRNA entities in vivo. The polypeptide is D-aminoacyl-tRNA deacylase (Methanosphaerula palustris (strain ATCC BAA-1556 / DSM 19958 / E1-9c)).